The primary structure comprises 110 residues: BolA-like protein 3 (110 aa).

This sequence belongs to the BolA/IbaG family. As to quaternary structure, interacts with NFU1.

Its subcellular location is the mitochondrion. Its function is as follows. Acts as a mitochondrial iron-sulfur (Fe-S) cluster assembly factor that facilitates (Fe-S) cluster insertion into a subset of mitochondrial proteins. Probably acts together with NFU1. The sequence is that of BolA-like protein 3 (BOLA3) from Bos taurus (Bovine).